A 256-amino-acid polypeptide reads, in one-letter code: Hydroxyacylglutathione hydrolase (256 aa).

The Zn(2+) site is built by His-56, His-58, Asp-60, His-61, His-114, Asp-133, and His-171.

It belongs to the metallo-beta-lactamase superfamily. Glyoxalase II family. Monomer. The cofactor is Zn(2+).

The enzyme catalyses an S-(2-hydroxyacyl)glutathione + H2O = a 2-hydroxy carboxylate + glutathione + H(+). It participates in secondary metabolite metabolism; methylglyoxal degradation; (R)-lactate from methylglyoxal: step 2/2. In terms of biological role, thiolesterase that catalyzes the hydrolysis of S-D-lactoyl-glutathione to form glutathione and D-lactic acid. This chain is Hydroxyacylglutathione hydrolase, found in Rhodobacter capsulatus (Rhodopseudomonas capsulata).